Here is a 152-residue protein sequence, read N- to C-terminus: SMN complex subunit smn1 (152 aa).

Residues 26 to 51 (KKYHSIEAKGGVSDPDSRLDGEKLIS) form an interacts with yip11/gem2 region. Positions 88-110 (DNKGLSDEKPETRAAETHQEFME) are disordered. The span at 91 to 108 (GLSDEKPETRAAETHQEF) shows a compositional bias: basic and acidic residues. A may interact with gem8 region spans residues 130–152 (SWYYAGYYTGLAEGLAKSEQRKD).

This sequence belongs to the SMN family. Homooligomer; may form homodimers and homotetramers. Part of the core SMN complex at least composed of smn1, yip11/gem2, gem6, gem7 and gem8. Part of the SMN-Sm complex. Interacts with yip11/gem2; the interaction is direct. Interacts with gem8; the interaction is direct. Interacts with proteins of the Sm complex, including smn1, smb1, smd1, smd2 and smd3.

It localises to the nucleus. Functionally, the SMN complex catalyzes the assembly of small nuclear ribonucleoproteins (snRNPs), the building blocks of the spliceosome, and thereby plays an important role in the splicing of cellular pre-mRNAs. Most spliceosomal snRNPs contain a common set of Sm proteins smb1, smd1, smd2, smd3, sme1, smf1 and smg1 that assemble in a heptameric protein ring on the Sm site of the small nuclear RNA to form the core snRNP (Sm core). In the cytosol, the Sm proteins smd1, smd2, sme1, smf1 and smg1 (5Sm) are trapped in an inactive 6S pICln-Sm complex by the chaperone saf5 that controls the assembly of the core snRNP. To assemble core snRNPs, the SMN complex accepts the trapped 5Sm proteins from saf5 forming an intermediate. Binding of snRNA inside 5Sm triggers eviction of the SMN complex, thereby allowing binding of smd3 and smb1 to complete assembly of the core snRNP. Within the SMN complex, smn1 acts as a structural backbone and together with yip11/gem2 it gathers the Sm complex subunits. This is SMN complex subunit smn1 from Schizosaccharomyces pombe (strain 972 / ATCC 24843) (Fission yeast).